The sequence spans 435 residues: Serine--tRNA ligase (435 aa).

242 to 244 (TAE) serves as a coordination point for L-serine. 273–275 (RSE) contacts ATP. Residue glutamate 296 participates in L-serine binding. ATP is bound at residue 360–363 (EISS). Position 396 (serine 396) interacts with L-serine.

Belongs to the class-II aminoacyl-tRNA synthetase family. Type-1 seryl-tRNA synthetase subfamily. Homodimer. The tRNA molecule binds across the dimer.

It localises to the cytoplasm. It carries out the reaction tRNA(Ser) + L-serine + ATP = L-seryl-tRNA(Ser) + AMP + diphosphate + H(+). The catalysed reaction is tRNA(Sec) + L-serine + ATP = L-seryl-tRNA(Sec) + AMP + diphosphate + H(+). It functions in the pathway aminoacyl-tRNA biosynthesis; selenocysteinyl-tRNA(Sec) biosynthesis; L-seryl-tRNA(Sec) from L-serine and tRNA(Sec): step 1/1. Its function is as follows. Catalyzes the attachment of serine to tRNA(Ser). Is also able to aminoacylate tRNA(Sec) with serine, to form the misacylated tRNA L-seryl-tRNA(Sec), which will be further converted into selenocysteinyl-tRNA(Sec). The sequence is that of Serine--tRNA ligase from Vibrio parahaemolyticus serotype O3:K6 (strain RIMD 2210633).